The sequence spans 571 residues: Phototropic-responsive NPH3 family protein NPY1 (571 aa).

One can recognise a BTB domain in the interval 29–97 (SDVTIHVGEV…CYGMTVTLNA (69 aa)). The NPH3 domain occupies 210-468 (DWWVEDVCEL…VQVLYFEQLR (259 aa)). Tyrosine 409 is subject to Phosphotyrosine. Positions 475–571 (ASVAASSHSP…SSRRRRHSIS (97 aa)) are disordered. Basic and acidic residues predominate over residues 484-504 (PVEKTEENKGEEATKKVELSK). A compositionally biased stretch (low complexity) spans 540-562 (SNKSSEVSSGSSQSPPAKSSSSS).

It belongs to the NPH3 family. Component of a complex made of PINs (e.g. PIN1 and PIN2), MAB4/MELs (e.g. NPY1/MAB4 and NPY5/MEL1) and AGC kinases (e.g. D6PK and PID) at the plasma membrane. Binds directly to PIN2 and PID. As to expression, accumulates in organ primordia such as cotyledons, leaves and floral organs. Expressed mainly in the apical regions of embryos including cotyledon tips and the apical meristem. Induced by the transcription factor ARF5/MP at the periphery of inflorescence meristems. Highly expressed in primary root tips and radicles.

It localises to the late endosome. Its subcellular location is the cell membrane. The protein localises to the cytoplasm. It is found in the cytosol. It functions in the pathway protein modification; protein ubiquitination. In terms of biological role, may act as a substrate-specific adapter of an E3 ubiquitin-protein ligase complex (CUL3-RBX1-BTB) which mediates the ubiquitination and subsequent proteasomal degradation of target proteins. Coregulates with PID the auxin-mediated plant organogenesis. Regulates basipetal PIN proteins (e.g. PIN1) polarization to establish inward auxin transport from the L1 surface of incipient organ primordia; this process is essential for the progression of flower organs development. Recruited to the plasma membrane by PINs (e.g. PIN1 and PIN2) and, in concert with AGC kinases-mediated (e.g. D6PK and PID) PINs phosphorylation, maintains their cell polarity (apical or basal) through limiting lateral diffusion-based escape. Induces auxin response in inner cell layers through a shift in PIN1 localization. Influences cotyledon development by regulating auxin distribution mainly in the protodermal cell layer. May play an essential role in root gravitropic responses. The sequence is that of Phototropic-responsive NPH3 family protein NPY1 from Arabidopsis thaliana (Mouse-ear cress).